Reading from the N-terminus, the 259-residue chain is Protein unc-50 homolog (259 aa).

Position 1 is an N-acetylmethionine (Met1). The Cytoplasmic portion of the chain corresponds to 1-82; sequence MLPSTSLNSS…TKDQWARDDP (82 aa). Ser6 is modified (phosphoserine). Residues 83 to 103 form a helical membrane-spanning segment; it reads AFLVLLSIWLCVSTIGFGFVL. Residues 104–115 lie on the Lumenal side of the membrane; sequence DMGFFETIKLLL. The helical transmembrane segment at 116 to 136 threads the bilayer; it reads WVVFIDCVGVGLLISTLMWFI. Topologically, residues 137 to 163 are cytoplasmic; the sequence is SNKYLVKRQSRDYDVEWGYAFDVHLNA. Residues 164 to 184 form a helical membrane-spanning segment; the sequence is FYPLLVILHFIQLFFINHVIL. Residues 185-187 are Lumenal-facing; the sequence is TDT. The helical transmembrane segment at 188–208 threads the bilayer; it reads FIGYLVGNTLWLIAVGYYIYV. Residues 209-222 lie on the Cytoplasmic side of the membrane; the sequence is TFLGYSALPFLKNT. A helical transmembrane segment spans residues 223–243; it reads VVLLYPFAPLIVLYGLSLALG. Over 244–259 the chain is Lumenal; it reads WNFTHTLCSFYKYRVK.

This sequence belongs to the unc-50 family. As to expression, expressed in brain, kidney and testis, and at lower levels in heart.

Its subcellular location is the nucleus inner membrane. The protein resides in the golgi apparatus membrane. Involved in the cell surface expression of neuronal nicotinic receptors. Binds RNA. This Rattus norvegicus (Rat) protein is Protein unc-50 homolog (Unc50).